Here is a 63-residue protein sequence, read N- to C-terminus: Omega-conotoxin Eu1.6 (63 aa).

Residues 1-21 form the signal peptide; it reads MGMRMMFTVFLLVVLATTVVS. Positions 22–47 are excised as a propeptide; the sequence is FTSDRAPDGRNAAAKAFGLITPTVRK. Cystine bridges form between Cys49-Cys55 and Cys50-Cys63. Positions 51–53 are ser-Xaa-Pro motif, crucial for potent interaction with nAChR; the sequence is SNP.

This sequence belongs to the conotoxin A superfamily. In terms of tissue distribution, expressed by the venom duct.

The protein resides in the secreted. Functionally, this amidated peptide potently and teversibly inhibits Cav2.2/CACNA1B. Steady-state inactivation is enhanced at hyperpolarized membrane potentials. Also shows a weak interaction at alpha-3-beta-4/ CHRNA3-CHRNB4 and alpha-7/CHRNA7 nAChRs subtypes. In vivo, exhibits a potent analgesic activity in rat partial sciatic nerve injury and chronic constriction injury models. This is Omega-conotoxin Eu1.6 from Conus eburneus (Ivory cone).